A 541-amino-acid polypeptide reads, in one-letter code: Chaperonin GroEL 2 (541 aa).

Residues 29–32, 86–90, G414, 478–480, and D494 contribute to the ATP site; these read TLGP, DGTTT, and DAA.

It belongs to the chaperonin (HSP60) family. As to quaternary structure, forms a cylinder of 14 subunits composed of two heptameric rings stacked back-to-back. Interacts with the co-chaperonin GroES.

The protein resides in the cytoplasm. The catalysed reaction is ATP + H2O + a folded polypeptide = ADP + phosphate + an unfolded polypeptide.. Its function is as follows. Together with its co-chaperonin GroES, plays an essential role in assisting protein folding. The GroEL-GroES system forms a nano-cage that allows encapsulation of the non-native substrate proteins and provides a physical environment optimized to promote and accelerate protein folding. This is Chaperonin GroEL 2 from Frankia casuarinae (strain DSM 45818 / CECT 9043 / HFP020203 / CcI3).